The following is a 285-amino-acid chain: Extracellular metalloprotease NCU07200 (285 aa).

An N-terminal signal peptide occupies residues 1-18 (MQIKSFLLAAAAAPAALG). Residue His-197 coordinates Zn(2+). The active site involves Glu-198. His-201 provides a ligand contact to Zn(2+). An intrachain disulfide couples Cys-233 to Cys-260. The N-linked (GlcNAc...) asparagine glycan is linked to Asn-282.

Belongs to the peptidase M43B family.

The protein localises to the secreted. Secreted metalloproteinase that allows assimilation of proteinaceous substrates. The chain is Extracellular metalloprotease NCU07200 from Neurospora crassa (strain ATCC 24698 / 74-OR23-1A / CBS 708.71 / DSM 1257 / FGSC 987).